A 369-amino-acid polypeptide reads, in one-letter code: Delta(14)-sterol reductase (369 aa).

7 helical membrane-spanning segments follow: residues 15 to 34 (QSVY…GEIL), 54 to 76 (CNGL…LGIV), 86 to 105 (LELL…ALYV), 146 to 168 (FFFV…AKSV), 178 to 195 (ILYQ…FVHE), 208 to 230 (RLGF…IQGW), and 240 to 262 (TVPA…RGAN). Residues K265, K269, L289, W294, and 301 to 302 (NY) each bind NADP(+). A helical transmembrane segment spans residues 275-297 (PIWGKPPVVVGGKLLVSGYWGIA). The helical transmembrane segment at 317–336 (GISSPVPYFYPIYLLILLIW) threads the bilayer. Residues D341, 345-349 (CAEKY), and Y356 each bind NADP(+).

Belongs to the ERG4/ERG24 family.

The protein localises to the membrane. The enzyme catalyses 4,4-dimethyl-5alpha-cholesta-8,24-dien-3beta-ol + NADP(+) = 4,4-dimethyl-5alpha-cholesta-8,14,24-trien-3beta-ol + NADPH + H(+). The protein operates within steroid biosynthesis; zymosterol biosynthesis; zymosterol from lanosterol: step 2/6. Functionally, reduces the C14=C15 double bond of 4,4-dimethyl-cholesta-8,14,24-trienol to produce 4,4-dimethyl-cholesta-8,24-dienol. Required for cell division and expansion and is involved in proper organization of the embryo. This chain is Delta(14)-sterol reductase (FK), found in Arabidopsis thaliana (Mouse-ear cress).